The primary structure comprises 371 residues: Diguanylate cyclase A (371 aa).

The 134-residue stretch at 233-366 folds into the GGDEF domain; that stretch reads ETLSILMIDI…GRNRVTLSKN (134 aa). Positions 241, 242, and 284 each coordinate Mg(2+). Catalysis depends on Glu-284, which acts as the Proton acceptor.

As to quaternary structure, exists as a homodimer and as larger aggregates. Both dimers and aggregates possess DGC activity. Requires Mg(2+) as cofactor. It depends on Mn(2+) as a cofactor.

The protein localises to the cytoplasm. The enzyme catalyses 2 GTP = 3',3'-c-di-GMP + 2 diphosphate. With respect to regulation, allosterically regulated by a feedback inhibition loop. In terms of biological role, catalyzes the conversion of GTP to cyclic-di-GMP (c-di-GMP). Shows activity under aerobic and anaerobic reaction conditions. In Treponema denticola (strain ATCC 35405 / DSM 14222 / CIP 103919 / JCM 8153 / KCTC 15104), this protein is Diguanylate cyclase A.